The primary structure comprises 106 residues: Small ribosomal subunit protein bS18 (106 aa).

Residues 1–22 (MSEETTVRPERTERSERPERPQ) show a composition bias toward basic and acidic residues. The interval 1–34 (MSEETTVRPERTERSERPERPQYRGNGPRKRRPF) is disordered.

The protein belongs to the bacterial ribosomal protein bS18 family. As to quaternary structure, part of the 30S ribosomal subunit. Forms a tight heterodimer with protein bS6.

Functionally, binds as a heterodimer with protein bS6 to the central domain of the 16S rRNA, where it helps stabilize the platform of the 30S subunit. This is Small ribosomal subunit protein bS18 from Geobacter metallireducens (strain ATCC 53774 / DSM 7210 / GS-15).